Reading from the N-terminus, the 622-residue chain is Leucine-rich repeat-containing protein 70 (622 aa).

The signal sequence occupies residues 1-31 (MCGLQFSLPCLRLFLVVTCYLLLLLHKEILG). The LRRNT domain occupies 32-60 (CSSVCQLCTGRQINCRNLGLSSIPKNFPE). LRR repeat units follow at residues 61 to 82 (STVF…ELTG), 85 to 106 (SLVA…AFVQ), 109 to 130 (HLYF…IFKG), 133 to 154 (NLRN…VFND), 157 to 178 (SVQY…TFVG), 181 to 202 (ALRI…GFQH), 205 to 226 (NLAC…AFEV), 229 to 250 (SLRR…AFKG), 253 to 274 (NLEY…GFSG), 277 to 298 (NLKH…TFSL), 301 to 322 (NLIY…TFEN), and 326 to 347 (SLKI…VLKP). Asparagine 215 carries an N-linked (GlcNAc...) asparagine glycan. Asparagine 266 is a glycosylation site (N-linked (GlcNAc...) asparagine). 2 N-linked (GlcNAc...) asparagine glycosylation sites follow: asparagine 331 and asparagine 400. The 48-residue stretch at 359–406 (NPWECNCKLLGLRDWLASSAITLNIYCQNPPSMRGRALRYINITNCVT) folds into the LRRCT domain. Residues 527-547 (AFDILLAFFILACVLIIFLIY) form a helical membrane-spanning segment.

Expressed at low levels in many tissues, including smooth muscle, brain, uterus, pancreas, cartilage, adipose, spleen and testis.

The protein resides in the membrane. In terms of biological role, renders cells highly sensitive to the activation by cytokines and lipopolysaccharide (LPS). The chain is Leucine-rich repeat-containing protein 70 (LRRC70) from Homo sapiens (Human).